The following is a 123-amino-acid chain: Immunoglobulin heavy variable 4-34 (123 aa).

The first 26 residues, 1-26 (MDLLHKNMKHLWFFLLLVAAPRWVLS), serve as a signal peptide directing secretion. A v region region spans residues 26–123 (SQVQLQQWGA…ADTAVYYCAR (98 aa)). A framework-1 region spans residues 27-51 (QVQLQQWGAGLLKPSETLSLTCAVY). In terms of domain architecture, Ig-like spans 27–123 (QVQLQQWGAG…ADTAVYYCAR (97 aa)). Cys-48 and Cys-121 are disulfide-bonded. Residues 52–59 (GGSFSGYY) are complementarity-determining-1. The tract at residues 60-76 (WSWIRQPPGKGLEWIGE) is framework-2. Positions 77-83 (INHSGST) are complementarity-determining-2. The N-linked (GlcNAc...) asparagine glycan is linked to Asn-78. Residues 84–121 (NYNPSLKSRVTISVDTSKNQFSLKLSSVTAADTAVYYC) form a framework-3 region. A complementarity-determining-3 region spans residues 122 to 123 (AR).

Immunoglobulins are composed of two identical heavy chains and two identical light chains; disulfide-linked.

Its subcellular location is the secreted. It localises to the cell membrane. Functionally, v region of the variable domain of immunoglobulin heavy chains that participates in the antigen recognition. Immunoglobulins, also known as antibodies, are membrane-bound or secreted glycoproteins produced by B lymphocytes. In the recognition phase of humoral immunity, the membrane-bound immunoglobulins serve as receptors which, upon binding of a specific antigen, trigger the clonal expansion and differentiation of B lymphocytes into immunoglobulins-secreting plasma cells. Secreted immunoglobulins mediate the effector phase of humoral immunity, which results in the elimination of bound antigens. The antigen binding site is formed by the variable domain of one heavy chain, together with that of its associated light chain. Thus, each immunoglobulin has two antigen binding sites with remarkable affinity for a particular antigen. The variable domains are assembled by a process called V-(D)-J rearrangement and can then be subjected to somatic hypermutations which, after exposure to antigen and selection, allow affinity maturation for a particular antigen. The protein is Immunoglobulin heavy variable 4-34 of Homo sapiens (Human).